We begin with the raw amino-acid sequence, 144 residues long: Cysteine-rich tail protein 1 (144 aa).

Residues alanine 51 to proline 105 are disordered. The span at isoleucine 78 to alanine 98 shows a compositional bias: polar residues.

This sequence belongs to the CYSRT1 family. In terms of assembly, interacts with LCE1B; the interaction is direct. Interacts with LCE2C; the interaction is direct. Interacts with LCE3A; the interaction is direct. Interacts with LCE3C; the interaction is direct. Interacts with LCE4A; the interaction is direct. Interacts with LCE5A; the interaction is direct. Interacts with LCE1C. Interacts with LCE1D. Interacts with LCE1E. Interacts with LCE2A. Interacts with LCE3D. Interacts with LCE3E. Interacts with LCE1A. As to expression, expressed in the stratum granulosum, in skin and oral epithelia (at protein level).

Its subcellular location is the cornified envelope. In terms of biological role, component of the stratum corneum that may contribute to epidermal antimicrobial host defenses. In Homo sapiens (Human), this protein is Cysteine-rich tail protein 1 (CYSRT1).